Here is a 160-residue protein sequence, read N- to C-terminus: UPF0262 protein BCAN_A0255 (160 aa).

This sequence belongs to the UPF0262 family.

The sequence is that of UPF0262 protein BCAN_A0255 from Brucella canis (strain ATCC 23365 / NCTC 10854 / RM-666).